Consider the following 190-residue polypeptide: T-cell receptor gamma chain C region 5/10-13 (190 aa).

The tract at residues 1–157 is c region; sequence DKRTDSDFSP…LQVTTTYAFY (157 aa). A helical membrane pass occupies residues 158 to 178; the sequence is TYLILFFKSMVHLAFVVFCLF. At 179-190 the chain is on the cytoplasmic side; sequence RRAAMSCDDQRS.

The protein resides in the membrane. The sequence is that of T-cell receptor gamma chain C region 5/10-13 from Mus musculus (Mouse).